A 197-amino-acid polypeptide reads, in one-letter code: Imidazoleglycerol-phosphate dehydratase (197 aa).

Belongs to the imidazoleglycerol-phosphate dehydratase family.

It localises to the cytoplasm. It catalyses the reaction D-erythro-1-(imidazol-4-yl)glycerol 3-phosphate = 3-(imidazol-4-yl)-2-oxopropyl phosphate + H2O. It participates in amino-acid biosynthesis; L-histidine biosynthesis; L-histidine from 5-phospho-alpha-D-ribose 1-diphosphate: step 6/9. The sequence is that of Imidazoleglycerol-phosphate dehydratase from Streptomyces avermitilis (strain ATCC 31267 / DSM 46492 / JCM 5070 / NBRC 14893 / NCIMB 12804 / NRRL 8165 / MA-4680).